A 601-amino-acid chain; its full sequence is Multidrug and toxin extrusion protein 2 (601 aa).

The Cytoplasmic segment spans residues 1–62; the sequence is MNTAFAGFDE…PRGFWDEARA (62 aa). The chain crosses the membrane as a helical span at residues 63–83; it reads LFVLSGPLFLFQVLNFLTYVV. Residues 84–95 lie on the Extracellular side of the membrane; sequence GTVFCGHLGKVE. Residues 96 to 116 form a helical membrane-spanning segment; sequence LASVTLGVAFVNVCGVSVGAG. Residues 117–145 lie on the Cytoplasmic side of the membrane; the sequence is LSSACDTLMSQSFGSPNKKHVGVILQRGS. The helical transmembrane segment at 146 to 166 threads the bilayer; that stretch reads LILLLCCLPCWALFLNTQHIL. Over 167-182 the chain is Extracellular; sequence LLFRQDPAVSRLTQDY. A helical transmembrane segment spans residues 183–203; that stretch reads AMIFIPGLPAIFLYSLLAKYL. At 204–212 the chain is on the cytoplasmic side; it reads QNQGIVWPQ. The helical transmembrane segment at 213-233 threads the bilayer; the sequence is VLSGVVGNCVNGVANYALVSV. At 234–241 the chain is on the extracellular side; sequence LNLGVRGS. The chain crosses the membrane as a helical span at residues 242–262; it reads AYANTISQFVQAAFLFLHIVL. The Cytoplasmic portion of the chain corresponds to 263 to 281; the sequence is KKLHLETWEGWSSQCLRDW. The chain crosses the membrane as a helical span at residues 282 to 301; the sequence is GPFLSLAIPSMLMMCVEWWA. The Extracellular segment spans residues 302–320; the sequence is YEIGSFLMGLLGVVDLSGQ. Residues 321 to 341 traverse the membrane as a helical segment; it reads AIIYEVATVVYMIPMGLGMAV. Residues 342-361 lie on the Cytoplasmic side of the membrane; it reads CVRVGTALGAADTLQAKRSA. A helical transmembrane segment spans residues 362–382; that stretch reads VSGLLCTAGTSLVVGTLLGLL. Residues 383–402 are Extracellular-facing; sequence NSQLGYIFTSDEEVIALVNQ. The chain crosses the membrane as a helical span at residues 403-423; that stretch reads VLPIYIVFQLVEAVCCVFGGV. Residues 424–437 are Cytoplasmic-facing; the sequence is LRGTGKQAFGAIVN. A helical membrane pass occupies residues 438–458; the sequence is AIMYYIVGLPLGIVLTFVVGM. Residue Arg-459 is a topological domain, extracellular. The chain crosses the membrane as a helical span at residues 460 to 480; sequence IMGLWLGMLTCIFLAAVTFVV. Topologically, residues 481-577 are cytoplasmic; sequence YAVQLDWKLA…LSVRQLLFRR (97 aa). Residues 578–598 form a helical membrane-spanning segment; it reads GAALAASVAVLMAGLLVRVLT. At 599-601 the chain is on the extracellular side; the sequence is TGY.

It belongs to the multi antimicrobial extrusion (MATE) (TC 2.A.66.1) family. Expressed in renal cortical tissues.

The protein localises to the cell membrane. Its subcellular location is the apical cell membrane. The catalysed reaction is thiamine(out) + H(+)(in) = thiamine(in) + H(+)(out). The enzyme catalyses estrone 3-sulfate(in) + H(+)(out) = estrone 3-sulfate(out) + H(+)(in). It carries out the reaction creatinine(in) + H(+)(out) = creatinine(out) + H(+)(in). Its function is as follows. Multidrug efflux pump that functions as a H(+)/organic cation antiporter. Mediates the efflux of cationic compounds, such as the model cations, tetraethylammonium (TEA) and 1-methyl-4-phenylpyridinium (MPP+), the platinum-based drug oxaliplatin or weak bases that are positively charged at physiological pH, cimetidine or the antidiabetic drug metformin. Mediates the efflux of the endogenous compounds creatinine, thiamine and estrone-3-sulfate. Plays a physiological role in the excretion of drugs, toxins and endogenous metabolites through the kidney. This chain is Multidrug and toxin extrusion protein 2 (SLC47A2), found in Oryctolagus cuniculus (Rabbit).